The chain runs to 224 residues: uncharacterized protein (224 aa).

It to M.tuberculosis Rv2558.

This is an uncharacterized protein from Mycobacterium tuberculosis (strain CDC 1551 / Oshkosh).